The primary structure comprises 234 residues: Small ribosomal subunit protein uS2c (234 aa).

This sequence belongs to the universal ribosomal protein uS2 family.

Its subcellular location is the plastid. The protein localises to the chloroplast. The protein is Small ribosomal subunit protein uS2c (rps2) of Pinus koraiensis (Korean pine).